A 127-amino-acid chain; its full sequence is MPRATNGPASRKRRKRILLRAKGFRGFRSKLFRYAKDAVYKAWQYEYRDRKRRKGQFRRLWIARISAAVRDRGLTYSRFMEGLKAANIDLDRKVLADLAVSDEKAFDVIFAQAKKAIEAKDGAALRA.

The protein belongs to the bacterial ribosomal protein bL20 family.

In terms of biological role, binds directly to 23S ribosomal RNA and is necessary for the in vitro assembly process of the 50S ribosomal subunit. It is not involved in the protein synthesizing functions of that subunit. The protein is Large ribosomal subunit protein bL20 of Akkermansia muciniphila (strain ATCC BAA-835 / DSM 22959 / JCM 33894 / BCRC 81048 / CCUG 64013 / CIP 107961 / Muc).